The primary structure comprises 423 residues: MDIDQYMTDVGRRARRASRSIARASTAAKNAALEAVARAIERDAGALKAANARDVARAKDKGLDAAFVDRLTLSDKALKTMVEGLRQVATLPDPIGEMSNLKYRPSGIQVGQMRVPLGVIGIIYESRPNVTIDAAALCLKSGNATILRGGSEALESNTALAKLIGEGLAEAGLPQDTVQVVETADRAAVGRLITMTEYVDVIVPRGGKSLIERLINEARVPMIKHLDGICHVYVDDRASVTKALTVCDNAKTHRYGTCNTMETLLVARGIAPAVLSPLGRLYREKGVELRVDADARAVLEAAGVGPLVDATDEDWRTEYLAPVLAIKIVDGIDAAIEHINEYGSHHTDAIVTEDHDRAMRFLREVDSASVMVNASTRFADGFEFGLGAEIGISNDKLHARGPVGLEGLTSLKYVVLGHGEGRQ.

Belongs to the gamma-glutamyl phosphate reductase family.

It is found in the cytoplasm. The catalysed reaction is L-glutamate 5-semialdehyde + phosphate + NADP(+) = L-glutamyl 5-phosphate + NADPH + H(+). Its pathway is amino-acid biosynthesis; L-proline biosynthesis; L-glutamate 5-semialdehyde from L-glutamate: step 2/2. Catalyzes the NADPH-dependent reduction of L-glutamate 5-phosphate into L-glutamate 5-semialdehyde and phosphate. The product spontaneously undergoes cyclization to form 1-pyrroline-5-carboxylate. This is Gamma-glutamyl phosphate reductase from Burkholderia thailandensis (strain ATCC 700388 / DSM 13276 / CCUG 48851 / CIP 106301 / E264).